The sequence spans 291 residues: Bifunctional protein FolD (291 aa).

NADP(+) is bound by residues 167-169, serine 192, and isoleucine 233; that span reads GRS.

Belongs to the tetrahydrofolate dehydrogenase/cyclohydrolase family. Homodimer.

The enzyme catalyses (6R)-5,10-methylene-5,6,7,8-tetrahydrofolate + NADP(+) = (6R)-5,10-methenyltetrahydrofolate + NADPH. It carries out the reaction (6R)-5,10-methenyltetrahydrofolate + H2O = (6R)-10-formyltetrahydrofolate + H(+). It participates in one-carbon metabolism; tetrahydrofolate interconversion. In terms of biological role, catalyzes the oxidation of 5,10-methylenetetrahydrofolate to 5,10-methenyltetrahydrofolate and then the hydrolysis of 5,10-methenyltetrahydrofolate to 10-formyltetrahydrofolate. The polypeptide is Bifunctional protein FolD (Dichelobacter nodosus (strain VCS1703A)).